The sequence spans 1338 residues: Thioester-containing protein 1 allele R1 (1338 aa).

An N-terminal signal peptide occupies residues 1 to 21 (MWQFIRSRILTVIIFIGAAHG). Asparagine 68, asparagine 199, asparagine 242, asparagine 312, and asparagine 481 each carry an N-linked (GlcNAc...) asparagine glycan. Residues 580-609 (ENEFDIFHSLGLFARTLDDILFDSANEKTG) are may contain the cleavage site. Asparagine 637, asparagine 728, and asparagine 813 each carry an N-linked (GlcNAc...) asparagine glycan. A cross-link (isoglutamyl cysteine thioester (Cys-Gln)) is located at residues 859 to 862 (CGEQ). 2 N-linked (GlcNAc...) asparagine glycosylation sites follow: asparagine 919 and asparagine 1065. Cystine bridges form between cysteine 1217–cysteine 1283, cysteine 1326–cysteine 1338, and cysteine 1329–cysteine 1334.

Heterodimer of a TEP1-N chain and an TEP1-C chain non-covalently linked. Forms a complex composed of TEP1-N and TEP1-C heterodimer, LRIM1 and APL1C; the interaction stabilizes TEP1-N and TEP1-C heterodimer, prevents its binding to tissues while circulating in the hemolymph and protects the thioester bond from hydrolysis. Mature TEP1 and to a lesser extent full-length TEP1 interact with SPCLIP1; the interaction is induced by microbial infection. Post-translationally, in the hemolymph, the full-length protein is cleaved by an unknow protease into a 75kDa N-terminal (TEP1-N) chain and an 80kDa C-terminal (TEP1-C) chain which remain non-covalently linked. The TEP1-C chain contains the thioester bond which covalently binds to the pathogen surface. Cleavage is induced by bacterial infection or aseptic wound injury. During embryonic and pupal development, the cleaved form is the predominant form. In terms of processing, N-glycosylated.

The protein localises to the secreted. Functionally, plays an essential role in the innate immune response against bacteria, fungi and protozoa infection. After proteolytic cleavage, the protein C-terminus binds covalently through a thioester bond to the pathogen surface resulting in pathogen clearance either by melanization or lysis. Initiate the recruitment and activation of a cascade of proteases, mostly of CLIP-domain serine proteases, which leads to the proteolytic cleavage of the prophenoloxidase (PPO) into active phenoloxidase (PO), the rate-limiting enzyme in melanin biosynthesis. In response to parasite P.berghei-mediated infection, binds to and mediates killing of ookinetes, as they egress from midgut epithelial cells into the basal labyrinth, by both lysis and melanization. During bacterial infection, binds to both Gram-positive and Gram-negative bacteria but only promotes phagocytosis of Gram-negative bacteria. Promotes the accumulation of SPCLIP1 onto the surface of P.berghei ookinetes and bacterium E.coli which leads to the melanization of the pathogen. Recruits CLIPA2 to bacteria surface. In response to bacterial infection, required for periostial hemocyte aggregation, but not for the aggregation of sessile hemocytes in non-periostial regions. During the late stage of fungus B.bassiana-mediated infection, required for the initiation of hyphae melanization by binding to the surface of hyphae and recruiting prophenoloxidase PPO to them. Plays a role in male fertility by binding to defective sperm cells and promoting their removal during spermatogenesis. In terms of biological role, binds to and mediates killing of parasite P.bergei ookinetes by lysis and melanization. Binds covalently through a thioester bond to the pathogen surface resulting in pathogen clearance. This chain is Thioester-containing protein 1 allele R1, found in Anopheles gambiae (African malaria mosquito).